A 398-amino-acid chain; its full sequence is uncharacterized protein (398 aa).

The N-terminal stretch at 1–21 (MRKVGITLSVVALVIMGFVAG) is a signal peptide. Cysteine 22 is modified (N-acetylcysteine). Residue cysteine 22 is the site of S-archaeol cysteine attachment.

This sequence belongs to the BMP lipoprotein family.

Its subcellular location is the cell membrane. This is an uncharacterized protein from Pyrococcus furiosus (strain ATCC 43587 / DSM 3638 / JCM 8422 / Vc1).